A 90-amino-acid chain; its full sequence is Bombyxin B-12 (90 aa).

A signal peptide spans 1-20; the sequence is MMKTTIMFMLVVVISLTYSS. Intrachain disulfides connect cysteine 30–cysteine 76, cysteine 42–cysteine 89, and cysteine 75–cysteine 80. The propeptide at 49 to 67 is c peptide like; that stretch reads SGAQYAPYFWTRQYLGSRG.

Belongs to the insulin family. As to quaternary structure, heterodimer of a B chain and an A chain linked by two disulfide bonds.

It is found in the secreted. Brain peptide responsible for activation of prothoracic glands to produce ecdysone in insects. The sequence is that of Bombyxin B-12 (BBXB12) from Bombyx mori (Silk moth).